Consider the following 433-residue polypeptide: Mitochondrial distribution and morphology protein 12 (433 aa).

The SMP-LTD domain maps to 1 to 433 (MSIDIDWERA…VYPSFWTFLI (433 aa)). 3 disordered regions span residues 62–113 (LSDP…GGQM), 180–279 (TPLG…RMRE), and 356–376 (GPET…SPRR). Residues 81–96 (SEERSPTREPVDRYGN) are compositionally biased toward basic and acidic residues. Positions 214–236 (SAQSRPSTANTGNTLPSRDSMSV) are enriched in polar residues. Over residues 268–279 (PLDDTPPRRMRE) the composition is skewed to basic and acidic residues.

This sequence belongs to the MDM12 family. Component of the ER-mitochondria encounter structure (ERMES) or MDM complex, composed of MMM1, MDM10, MDM12 and MDM34. An MMM1 homodimer associates with one molecule of MDM12 on each side in a pairwise head-to-tail manner, and the SMP-LTD domains of MMM1 and MDM12 generate a continuous hydrophobic tunnel for phospholipid trafficking.

The protein resides in the mitochondrion outer membrane. The protein localises to the endoplasmic reticulum membrane. Functionally, component of the ERMES/MDM complex, which serves as a molecular tether to connect the endoplasmic reticulum (ER) and mitochondria. Components of this complex are involved in the control of mitochondrial shape and protein biogenesis, and function in nonvesicular lipid trafficking between the ER and mitochondria. MDM12 is required for the interaction of the ER-resident membrane protein MMM1 and the outer mitochondrial membrane-resident beta-barrel protein MDM10. The MDM12-MMM1 subcomplex functions in the major beta-barrel assembly pathway that is responsible for biogenesis of all mitochondrial outer membrane beta-barrel proteins, and acts in a late step after the SAM complex. The MDM10-MDM12-MMM1 subcomplex further acts in the TOM40-specific pathway after the action of the MDM12-MMM1 complex. Essential for establishing and maintaining the structure of mitochondria and maintenance of mtDNA nucleoids. The protein is Mitochondrial distribution and morphology protein 12 of Ajellomyces capsulatus (strain NAm1 / WU24) (Darling's disease fungus).